The chain runs to 37 residues: Large ribosomal subunit protein bL36 (37 aa).

The protein belongs to the bacterial ribosomal protein bL36 family.

This chain is Large ribosomal subunit protein bL36, found in Beutenbergia cavernae (strain ATCC BAA-8 / DSM 12333 / CCUG 43141 / JCM 11478 / NBRC 16432 / NCIMB 13614 / HKI 0122).